A 277-amino-acid chain; its full sequence is RsbT co-antagonist protein RsbRB (277 aa).

Residues 165–276 form the STAS domain; it reads SSPVITLSKS…TNLAQALNYH (112 aa). Threonine 186 is modified (phosphothreonine).

Interacts with RsbRA and RsbS in the stressosome. The stressosome probably also contains RsbRC and RsbRD. In terms of processing, phosphorylated by RsbT.

In terms of biological role, one of 4 functionally non-identical RsbR paralogs, it functions in the environmental signaling branch of the general stress response. Functionally, negative regulator of sigma-B activity. Non-phosphorylated RsbS binds to RsbT, preventing its association with RsbU. Requires any one of RsbRA, RsbRB, RsbRC or RsbRD to sequester RsbT. When RsbS and the RsbR paralog(s) are phosphorylated, they release RsbT, which can then bind and activate RsbU. The chain is RsbT co-antagonist protein RsbRB (rsbRB) from Bacillus subtilis (strain 168).